The chain runs to 572 residues: Methionine--tRNA ligase (572 aa).

Residues P11–T21 carry the 'HIGH' region motif. Zn(2+)-binding residues include C143, C146, C156, and C159. The 'KMSKS' region signature appears at Q334 to S338. K337 lines the ATP pocket.

It belongs to the class-I aminoacyl-tRNA synthetase family. MetG type 1 subfamily. Requires Zn(2+) as cofactor.

It localises to the cytoplasm. It carries out the reaction tRNA(Met) + L-methionine + ATP = L-methionyl-tRNA(Met) + AMP + diphosphate. Functionally, is required not only for elongation of protein synthesis but also for the initiation of all mRNA translation through initiator tRNA(fMet) aminoacylation. In Aeropyrum pernix (strain ATCC 700893 / DSM 11879 / JCM 9820 / NBRC 100138 / K1), this protein is Methionine--tRNA ligase (metG).